The sequence spans 397 residues: Transcription factor xenB (397 aa).

Residues 220–249 (TISDFETGDRQTISRSDTNSEVRPIPESPS) form a disordered region. Residues 229–240 (RQTISRSDTNSE) show a composition bias toward polar residues.

Its function is as follows. Transcription factor; part of the gene cluster that mediates the biosynthesis of xenoacremones such as xenoacremone A, a compound that shows inhibitory activity toward the PI3K/AKT signaling pathway and which has the ability to induce apoptosis of A549 lung cancer cells. Acts as a positive regulator of the xenoacremones biosynthesis gene cluster. The polypeptide is Transcription factor xenB (Xenoacremonium sinensis (Endophyte fungus)).